A 140-amino-acid polypeptide reads, in one-letter code: Putative pre-16S rRNA nuclease (140 aa).

It belongs to the YqgF nuclease family.

It localises to the cytoplasm. Its function is as follows. Could be a nuclease involved in processing of the 5'-end of pre-16S rRNA. In Vibrio cholerae serotype O1 (strain ATCC 39541 / Classical Ogawa 395 / O395), this protein is Putative pre-16S rRNA nuclease.